Reading from the N-terminus, the 347-residue chain is Toluene-4-sulfonate monooxygenase system iron-sulfur subunit TsaM1 (347 aa).

The 103-residue stretch at 7–109 folds into the Rieske domain; the sequence is WYVAAWDTEI…VVERNRLVWI (103 aa). The [2Fe-2S] cluster site is built by C48, H50, C67, and H70.

Homotetramer. Part of the p-toluenesulfonate methyl-monooxygenase complex TsaBM, comprising the reductase TsaB and the oxygenase TsaM. It depends on [2Fe-2S] cluster as a cofactor.

The catalysed reaction is toluene-4-sulfonate + NADH + O2 + H(+) = 4-(hydroxymethyl)benzenesulfonate + NAD(+) + H2O. Functionally, involved in the toluene-4-sulfonate degradation pathway. Does not discriminate between the sulfonate and the carboxyl substituents and can also be involved in the p-toluenecarboxylate degradation pathway. Can use toluene-4-sulfonate, p-toluate, m-toluate and 4-ethylbenzoate as substrates, but not p-xylene, toluene and p-cresol. Also catalyzes the demethylation of 4-methoxybenzoate to 4-hydroxybenzoate. This Comamonas testosteroni (Pseudomonas testosteroni) protein is Toluene-4-sulfonate monooxygenase system iron-sulfur subunit TsaM1 (tsaM1).